The primary structure comprises 228 residues: Death domain-containing membrane protein NRADD (228 aa).

Over 1–52 the chain is Extracellular; it reads MLHNVSKGVVYSDTALKGQDGDREGMWVGAGGALAPNTSSLFPPEPPGASSN. N-linked (GlcNAc...) asparagine glycosylation is found at Asn4 and Asn37. Residues 53-73 traverse the membrane as a helical; Signal-anchor for type III membrane protein segment; the sequence is IIPVYCALLATVVLGLLAYVA. The Cytoplasmic portion of the chain corresponds to 74 to 228; sequence FKCWRSRKQR…SSPAEGCSVV (155 aa). In terms of domain architecture, Death spans 143-222; it reads EEVQRLLILG…DVVQVLSSPA (80 aa).

As to quaternary structure, interacts with NTRK1. Isoform 1 and isoform 2 interact with NGFR. Interacts with SORT1. Isoform 1 is N-glycosylated. Isoform 2 is not N-glycosylated. As to expression, detected in embryo, including embryonic brain. Detected at very low levels in adult testis, spleen, thymus and lung.

The protein resides in the cell membrane. It is found in the nucleus. Modulates NTRK1 signaling. Can activate several intracellular signaling pathways, leading to activation of JUN. Promotes translocation of SORT1 to the cell membrane, and thereby hinders lysosomal degradation of SOTR1 and promotes its interaction with NGFR. Both isoform 1 and isoform 2 promote apoptosis. The chain is Death domain-containing membrane protein NRADD (Nradd) from Rattus norvegicus (Rat).